The sequence spans 60 residues: Rubredoxin 4 (60 aa).

The 52-residue stretch at 4 to 55 (YKLYQCAQCGFEYDEAVGWPEDGIEPGTRWDDIPEDWSCPDCGAAKSDFFMV) folds into the Rubredoxin-like domain. Positions 9, 12, 42, and 45 each coordinate Fe cation.

Belongs to the rubredoxin family. Requires Fe(3+) as cofactor.

In terms of biological role, involved in the hydrocarbon hydroxylating system, which transfers electrons from NADH to rubredoxin reductase and then through rubredoxin to alkane 1 monooxygenase. This is Rubredoxin 4 (rubA4) from Rhodococcus sp. (strain Q15).